Consider the following 627-residue polypeptide: Serine/threonine-protein kinase Nek5 (627 aa).

Residues 4–255 form the Protein kinase domain; sequence FHLIKIIGEG…VTSLLKRPFL (252 aa). ATP is bound by residues 10 to 18 and K33; that span reads IGEGTFGKV. D124 acts as the Proton acceptor in catalysis. Positions 563-580 are enriched in acidic residues; that stretch reads QLEPGSDEDDIKFEESED. Disordered regions lie at residues 563–582 and 591–627; these read QLEPGSDEDDIKFEESEDEL and EKLAASTEEAEQAPSSSKNAEEPGEKEKTNLPVKKLQ. The span at 609–619 shows a compositional bias: basic and acidic residues; the sequence is NAEEPGEKEKT.

The protein belongs to the protein kinase superfamily. NEK Ser/Thr protein kinase family. NIMA subfamily. The cofactor is Mg(2+).

The protein localises to the cell projection. It localises to the cilium. Its subcellular location is the flagellum. The catalysed reaction is L-seryl-[protein] + ATP = O-phospho-L-seryl-[protein] + ADP + H(+). The enzyme catalyses L-threonyl-[protein] + ATP = O-phospho-L-threonyl-[protein] + ADP + H(+). This is Serine/threonine-protein kinase Nek5 (Nek5) from Mus musculus (Mouse).